Consider the following 307-residue polypeptide: Aspartate carbamoyltransferase catalytic subunit (307 aa).

Carbamoyl phosphate-binding residues include Arg55 and Thr56. Residue Lys85 coordinates L-aspartate. Arg106, His134, and Gln137 together coordinate carbamoyl phosphate. L-aspartate contacts are provided by Arg167 and Arg228. Leu266 and Pro267 together coordinate carbamoyl phosphate.

This sequence belongs to the aspartate/ornithine carbamoyltransferase superfamily. ATCase family. As to quaternary structure, heterododecamer (2C3:3R2) of six catalytic PyrB chains organized as two trimers (C3), and six regulatory PyrI chains organized as three dimers (R2).

The catalysed reaction is carbamoyl phosphate + L-aspartate = N-carbamoyl-L-aspartate + phosphate + H(+). The protein operates within pyrimidine metabolism; UMP biosynthesis via de novo pathway; (S)-dihydroorotate from bicarbonate: step 2/3. In terms of biological role, catalyzes the condensation of carbamoyl phosphate and aspartate to form carbamoyl aspartate and inorganic phosphate, the committed step in the de novo pyrimidine nucleotide biosynthesis pathway. The sequence is that of Aspartate carbamoyltransferase catalytic subunit from Tolumonas auensis (strain DSM 9187 / NBRC 110442 / TA 4).